The sequence spans 173 residues: Dual-action ribosomal maturation protein DarP (173 aa).

The protein belongs to the DarP family.

The protein localises to the cytoplasm. In terms of biological role, member of a network of 50S ribosomal subunit biogenesis factors which assembles along the 30S-50S interface, preventing incorrect 23S rRNA structures from forming. Promotes peptidyl transferase center (PTC) maturation. The protein is Dual-action ribosomal maturation protein DarP of Pseudomonas entomophila (strain L48).